The primary structure comprises 91 residues: C-C motif chemokine 5 (91 aa).

The signal sequence occupies residues 1–23 (MKISAAALTIILTAAALCTPAPA). 2 disulfide bridges follow: Cys-33/Cys-57 and Cys-34/Cys-73.

This sequence belongs to the intercrine beta (chemokine CC) family. As to expression, T-cell and macrophage specific.

Its subcellular location is the secreted. In terms of biological role, chemoattractant for blood monocytes, memory T-helper cells and eosinophils. Causes the release of histamine from basophils and activates eosinophils. May activate several chemokine receptors including CCR1, CCR3, CCR4 and CCR5. May also be an agonist of the G protein-coupled receptor GPR75. Together with GPR75, may play a role in neuron survival through activation of a downstream signaling pathway involving the PI3, Akt and MAP kinases. By activating GPR75 may also play a role in insulin secretion by islet cells. This is C-C motif chemokine 5 (Ccl5) from Mus musculus (Mouse).